Reading from the N-terminus, the 1413-residue chain is MADDHKVESGLNTHVEKRAEEVHQLARQFTEQSTFSTAGQNPFAAEPGSVLDPIGNNFDALAWCKAMLHVHTEDEKAHPLRTLGIAFNNLYVHGFGSDTDYQKSVGNVWFEALALARKALGTQNQRRIQILQNLEGTVEAGEMLVVLGPPGSGCSTFLKTIAGETDGFHIDKESSINYQGVSAKKMAHEFRGEAIYAAEVDVHFPKLTVGDTLYFAARARAPRHIPGGVDVAQYASHKRDVIMAILGISHTKNTIVGNDFIRGVSGGERKRVSIAEACLSSAPLQCWDNSTRGLDSANAIEFCKALRMQADINGATVCVSLYQAPQAAYHYFDKVLVLYEGRQIFFGRTDAAKQYFLDMGFACPERQTDADFLTSMTSHIERVVQPGYEGCVPRTPDEFAARWRGSHQRARVLQDVENYNTKFTLNGEFLGKFRHSRRAQQARVQRVSSPYTLSYAQQVNLCLWRGYQRLKADPSVTISSLIGNVITALVIASIFYNLQPNTSTFFQRGALLFFACLINALGCGLEMLTLYAQRGIVEKHARYALYHPSAEAISSMIMDLPFKVLNAILSLVQALPFCAVVLLGLYSYTGFAIPTGYMLGWARWIAYINPINYGFESLLINEFHDRDFQCVAIVPSGPSYMDLHSRNQVCSTVGSVPGQAFVNGDAYIQSAYDYNVSHKWRNIGIILAFMVVLGAIYLVATDFITEKKSKGEILVFPRGHGALKSGKPDDFEGGSDRNASQEKSKSDRDDLTVIESQTAIFQWQDVCFDIKIGKESRRILDHVDGWVKPGTLTALMGVSGAGKTTLLDVLATRTTLGVISGEMLVDGKPRDESFQRKTGYAQQQDLHLSTATVREALEFSALLRQPAHVPRREKINYVTEVIKLLDMADYADAVIGVPGEGLNVEQRKRLTIGVELAARPALLLFLDEPTSGLDSQTSWAILDLLNKLRKNGQAILCTIHQPSAMLFQRFDRLLFLQAGGQTVYFGDIGQNSQILIDYFVRNGGPPCPPAANPAEWMLDVIGAAPGSHTDIDWFETWRNSPEYAQVQAHLSSLKLEHAQQNPLARVSPGTEREDRASYREFAAPFCAQLREVQIRVFQQFWRSPIYIYSKAILCVLPALFVGFSLFNTPNTIQGLQNQMFSIFLLLIQFGQLIQQIMPHFVTQRALYEVRERPSKTYSWTVFMLSNIGVELFWNSLMSILMFLCWYYPIGMYRNAEPSDTVHLRGAQMWLLIWTFLLFSSTFAHFMIAALDAAENAGNLGSFLLLLCLLFCGVLATPAQLPGFWIFMYRVSPFTYLVSGMLAVGIADTTVTCADNEYLRFDPVNDTTCGQYLAPYIAQAGGYLHDETATAACRFCPVADTNAYLRGVGASYADVWRNFGLMWVFIFTNIVAACLLYWWTRVPRVKKPVVAPQA.

The ABC transporter 1 domain occupies 108–365 (VWFEALALAR…FLDMGFACPE (258 aa)). Asn289 carries N-linked (GlcNAc...) asparagine glycosylation. Residues 476-496 (VTISSLIGNVITALVIASIFY) traverse the membrane as a helical segment. N-linked (GlcNAc...) asparagine glycosylation occurs at Asn501. 2 helical membrane passes run 510-530 (ALLFFACLINALGCGLEMLTL) and 564-584 (VLNAILSLVQALPFCAVVLLG). Residue Asn675 is glycosylated (N-linked (GlcNAc...) asparagine). Residues 683 to 703 (IGIILAFMVVLGAIYLVATDF) form a helical membrane-spanning segment. The tract at residues 725–748 (SGKPDDFEGGSDRNASQEKSKSDR) is disordered. A glycan (N-linked (GlcNAc...) asparagine) is linked at Asn738. A compositionally biased stretch (basic and acidic residues) spans 739 to 748 (ASQEKSKSDR). Residues 761–1003 (FQWQDVCFDI…ILIDYFVRNG (243 aa)) enclose the ABC transporter 2 domain. Helical transmembrane passes span 1105-1125 (IYIYSKAILCVLPALFVGFSL), 1142-1162 (IFLLLIQFGQLIQQIMPHFVT), 1191-1211 (LFWNSLMSILMFLCWYYPIGM), 1230-1250 (LLIWTFLLFSSTFAHFMIAAL), 1266-1286 (LCLLFCGVLATPAQLPGFWIF), and 1290-1310 (VSPFTYLVSGMLAVGIADTTV). N-linked (GlcNAc...) asparagine glycosylation occurs at Asn1324. A helical membrane pass occupies residues 1378–1398 (FGLMWVFIFTNIVAACLLYWW).

The protein belongs to the ABC transporter superfamily. ABCG family. PDR (TC 3.A.1.205) subfamily.

It is found in the cell membrane. ABC-type transporter; part of the gene cluster that mediates the biosynthesis of the sesterterpene variecolin. VrcC is probably involved in the secretion of variecolin. This Aspergillus aculeatus (strain ATCC 16872 / CBS 172.66 / WB 5094) protein is ABC-type transporter vrcC.